Reading from the N-terminus, the 382-residue chain is Mannitol-1-phosphate 5-dehydrogenase (382 aa).

3–14 (ALHFGAGNIGRG) lines the NAD(+) pocket.

It belongs to the mannitol dehydrogenase family.

It catalyses the reaction D-mannitol 1-phosphate + NAD(+) = beta-D-fructose 6-phosphate + NADH + H(+). This is Mannitol-1-phosphate 5-dehydrogenase from Cronobacter sakazakii (strain ATCC BAA-894) (Enterobacter sakazakii).